The following is a 729-amino-acid chain: Ubiquitin carboxyl-terminal hydrolase BAP1 (729 aa).

Positions G4–P235 constitute a UCH catalytic domain. The Arg-finger motif signature appears at R56–R60. C91 serves as the catalytic Nucleophile. The active-site Proton donor is the H169. Residue S292 is modified to Phosphoserine. Positions A301–T351 are disordered. The HBM-like motif motif lies at N363–Y366. A phosphoserine mark is found at S369 and S395. 2 disordered regions span residues Q372–G435 and S464–T524. Residues S395 to V409 show a composition bias toward acidic residues. Residues T480–T524 show a composition bias toward polar residues. Residue T493 is modified to Phosphothreonine. A phosphoserine mark is found at S521, S537, S585, and S597. Residues L575–S623 are disordered. A compositionally biased stretch (polar residues) spans S582–P598. The interaction with BRCA1 stretch occupies residues S596–S721. The segment covering V599–G614 has biased composition (basic and acidic residues). A coiled-coil region spans residues L636–K656. Residues E642–G686 form an interaction with YY1 region. The ULD domain occupies N670 to V698. Residues R699–R701 form an interaction with nucleosomal DNA forming a DNA clamp with ASXL1 region. A Classical bipartite Nuclear localization signal (NLS) motif is present at residues R699–R722. A disordered region spans residues G703–Q729. Positions R713–Q729 are positively charged C-terminal extension (CTE). Positions R717 to Y724 match the Non-classical PY-nuclear localization signal (PY-NLS) motif.

This sequence belongs to the peptidase C12 family. BAP1 subfamily. Core component of the polycomb repressive deubiquitinase (PR-DUB) complex, at least composed of BAP1, one of ASXL1, ASXL2 or (probably) ASXL3, and one of MBD5 or MBD6. The PR-DUB core associates with a number of accessory proteins, including FOXK1, FOXK2, KDM1B, HCFC1, YY1 and OGT; KDM1B specifically associates with ASXL2 PR-DUB complexes. The BAP1 deubiquitinase activity is not required for PR-DUB assembly. Homodimerizes (via coiled-coil hinge-region between the UCH and ULD domains) to mediate assembly of 2 copies of the BAP1-ASXL heterodimer into a bisymmetric tetramer; dimerization enhances association with nucleosomes. The PR-DUB complex associates with nucleosomes to mediate deubiquitination of 'lys-120' of histone H2AK118ub1 substrates; the association requires the positively charged C-terminal tail of BAP1. Interacts (via ULD domain) with ASXL1 (via DEUBAD domain); the interaction is direct and forms a ubiquitin binding cleft. The interaction with ASXL1 stabilizes BAP1 but is not required for nucleosome binding. Associates (via C-terminus) with nucleosome and chromatosome complexes through direct interaction with DNA and the histone3/4 dimer; this association displaces the histone-2A C-terminal tail, extending and orienting the H2AK118ub1 substrate towards the BAP1 deubiquitinase active site. Also interacts (via arginine finger) directly with the histone H2A-H2B acidic patch; this interaction is not critical for nucleosome-chromatosome association but may play a role in orienting the H2AK118ub1 substrate towards the PR-DUB complex active site. Interacts with BRCA1 (via the RING finger). Interacts (via HBM-like motif) with HCFC1. Interacts (via a C-terminal region overlapping the ULD domain) with YY1; the interaction is direct and requires the interaction with HCFC1. Interacts (when phosphorylated at Thr-493) with FOXK1. Interacts (when phosphorylated at Thr-493) with FOXK2; leading to recruitment of the PR-DUB complex and repression of FOXK2 target genes. Interacts (via non-classical PY-NLS) with TNPO1/transportin-1 (via HEAT repeats 8-12); the interaction is direct, mediates BAP1 nuclear localization and disrupts BAP1 homodimerization. Interacts (via C-terminus) with KPNA1/importin alpha5 and KPNA2/importin alpha1; these interactions can contribute to BAP1 nuclear localization but are less important than the interaction with TNPO1/transportin-1. The interaction with TNPO1/transportin-1 disrupts homodimerization and blocks ubiquitination by UBE2O. In terms of processing, ubiquitinated: monoubiquitinated at multiple sites within its nuclear localization signal (NLS) BY UBE2O, leading to cytoplasmic retention. Able to mediate autodeubiquitination via intramolecular interactions to counteract cytoplasmic retention. Monoubiquitinated on at least 4 sites near or within its PY-NLS. As to expression, highly expressed in testis, placenta and ovary. Expressed in breast. levels in the placenta increase over the course of pregnancy.

It localises to the cytoplasm. The protein resides in the nucleus. It is found in the chromosome. The enzyme catalyses Thiol-dependent hydrolysis of ester, thioester, amide, peptide and isopeptide bonds formed by the C-terminal Gly of ubiquitin (a 76-residue protein attached to proteins as an intracellular targeting signal).. In terms of biological role, deubiquitinating enzyme that plays a key role in chromatin by mediating deubiquitination of histone H2A and HCFC1. Catalytic component of the polycomb repressive deubiquitinase (PR-DUB) complex, a complex that specifically mediates deubiquitination of histone H2A monoubiquitinated at 'Lys-120' (H2AK119ub1). Does not deubiquitinate monoubiquitinated histone H2B. The PR-DUB complex is an epigenetic regulator of gene expression and acts as a transcriptional coactivator, affecting genes involved in development, cell communication, signaling, cell proliferation and cell viability. Antagonizes PRC1 mediated H2AK119ub1 monoubiquitination. As part of the PR-DUB complex, associates with chromatin enriched in histone marks H3K4me1, H3K4me3, and H3K27Ac, but not in H3K27me3. Recruited to specific gene-regulatory regions by YY1. Acts as a regulator of cell growth by mediating deubiquitination of HCFC1 N-terminal and C-terminal chains, with some specificity toward 'Lys-48'-linked polyubiquitin chains compared to 'Lys-63'-linked polyubiquitin chains. Deubiquitination of HCFC1 does not lead to increase stability of HCFC1. Interferes with the BRCA1 and BARD1 heterodimer activity by inhibiting their ability to mediate ubiquitination and autoubiquitination. It however does not mediate deubiquitination of BRCA1 and BARD1. Able to mediate autodeubiquitination via intramolecular interactions to counteract monoubiquitination at the nuclear localization signal (NLS), thereby protecting it from cytoplasmic sequestration. Negatively regulates epithelial-mesenchymal transition (EMT) of trophoblast stem cells during placental development by regulating genes involved in epithelial cell integrity, cell adhesion and cytoskeletal organization. The chain is Ubiquitin carboxyl-terminal hydrolase BAP1 from Homo sapiens (Human).